A 149-amino-acid chain; its full sequence is uncharacterized protein (149 aa).

A helical transmembrane segment spans residues 12–31 (FKNLVIGAVSGVAAAYFLST).

It is found in the membrane. This is an uncharacterized protein from Streptococcus pyogenes serotype M6 (strain ATCC BAA-946 / MGAS10394).